A 172-amino-acid chain; its full sequence is S-ribosylhomocysteine lyase (172 aa).

Fe cation is bound by residues H54, H58, and C128.

It belongs to the LuxS family. As to quaternary structure, homodimer. Fe cation serves as cofactor.

It catalyses the reaction S-(5-deoxy-D-ribos-5-yl)-L-homocysteine = (S)-4,5-dihydroxypentane-2,3-dione + L-homocysteine. In terms of biological role, involved in the synthesis of autoinducer 2 (AI-2) which is secreted by bacteria and is used to communicate both the cell density and the metabolic potential of the environment. The regulation of gene expression in response to changes in cell density is called quorum sensing. Catalyzes the transformation of S-ribosylhomocysteine (RHC) to homocysteine (HC) and 4,5-dihydroxy-2,3-pentadione (DPD). The polypeptide is S-ribosylhomocysteine lyase (Vibrio alginolyticus).